A 377-amino-acid polypeptide reads, in one-letter code: Nitric oxide reductase FlRd-NAD(+) reductase (377 aa).

It belongs to the FAD-dependent oxidoreductase family. Requires FAD as cofactor.

It localises to the cytoplasm. The enzyme catalyses 2 reduced [nitric oxide reductase rubredoxin domain] + NAD(+) + H(+) = 2 oxidized [nitric oxide reductase rubredoxin domain] + NADH. Its pathway is nitrogen metabolism; nitric oxide reduction. In terms of biological role, one of at least two accessory proteins for anaerobic nitric oxide (NO) reductase. Reduces the rubredoxin moiety of NO reductase. The protein is Nitric oxide reductase FlRd-NAD(+) reductase of Escherichia coli (strain K12 / MC4100 / BW2952).